Reading from the N-terminus, the 408-residue chain is MINALKGMKDLLDKDAYCYEKVIKTCEEVAKNYGFTFINTPHLELCTLFKRSVGESSDIVGKEMYEFIDKGENHVCMRPEGTAGVVRAYIEKKLDKNTSVKRWFYHGSMFRYERPQKGRLREFHQFGVESFGNASVYEDASIILMLVEIFSRLDIKFKLLINSLGCLKCMPKYRENLIHFLDSKEGFCEDCLRRKNLNPIRVLDCKNEHCQSLLNDAPLLNQNLCSSCQKDFEILQSVLKENGVDFEVDSKLVRGLDYYSKTAFEFISDEIGAKAAIAGGGRYDRLIEYLDGKSGFGVGFAMGIERIIAILEQKEEKVQREGIYLCAMDEIYIQKLLHIATNLRKEHKVLLSYEARKLAKHLENADKNNAEIFLCMGENEAQNESLFYKNLAKKEEKMIKISDLKKVL.

It belongs to the class-II aminoacyl-tRNA synthetase family. In terms of assembly, homodimer.

It is found in the cytoplasm. The enzyme catalyses tRNA(His) + L-histidine + ATP = L-histidyl-tRNA(His) + AMP + diphosphate + H(+). This is Histidine--tRNA ligase from Campylobacter jejuni subsp. jejuni serotype O:23/36 (strain 81-176).